The following is a 423-amino-acid chain: Adenylosuccinate synthetase (423 aa).

GTP is bound by residues 12–18 (GDEGKGK) and 40–42 (GHT). The active-site Proton acceptor is Asp-13. The Mg(2+) site is built by Asp-13 and Gly-40. Residues 13-16 (DEGK), 38-41 (NAGH), Thr-128, Arg-142, Gln-223, Thr-238, and Arg-302 contribute to the IMP site. His-41 acts as the Proton donor in catalysis. A substrate-binding site is contributed by 298 to 304 (TTTGRPR). GTP is bound by residues Arg-304, 330-332 (RLD), and 412-414 (CIG).

This sequence belongs to the adenylosuccinate synthetase family. As to quaternary structure, homodimer. Mg(2+) is required as a cofactor.

It localises to the cytoplasm. It carries out the reaction IMP + L-aspartate + GTP = N(6)-(1,2-dicarboxyethyl)-AMP + GDP + phosphate + 2 H(+). Its pathway is purine metabolism; AMP biosynthesis via de novo pathway; AMP from IMP: step 1/2. Plays an important role in the de novo pathway of purine nucleotide biosynthesis. Catalyzes the first committed step in the biosynthesis of AMP from IMP. This chain is Adenylosuccinate synthetase, found in Dehalococcoides mccartyi (strain ATCC BAA-2266 / KCTC 15142 / 195) (Dehalococcoides ethenogenes (strain 195)).